A 429-amino-acid chain; its full sequence is Adenylosuccinate synthetase (429 aa).

Residues 12-18 (GDEGKGK) and 40-42 (GHT) contribute to the GTP site. Aspartate 13 serves as the catalytic Proton acceptor. Mg(2+) contacts are provided by aspartate 13 and glycine 40. IMP-binding positions include 13–16 (DEGK), 38–41 (NAGH), threonine 128, arginine 142, glutamine 223, threonine 238, and arginine 302. The active-site Proton donor is the histidine 41. 298-304 (VNTGRPR) is a substrate binding site. Residues arginine 304, 330 to 332 (KLD), and 412 to 414 (GVG) each bind GTP.

The protein belongs to the adenylosuccinate synthetase family. As to quaternary structure, homodimer. The cofactor is Mg(2+).

It is found in the cytoplasm. It carries out the reaction IMP + L-aspartate + GTP = N(6)-(1,2-dicarboxyethyl)-AMP + GDP + phosphate + 2 H(+). It participates in purine metabolism; AMP biosynthesis via de novo pathway; AMP from IMP: step 1/2. Its function is as follows. Plays an important role in the de novo pathway of purine nucleotide biosynthesis. Catalyzes the first committed step in the biosynthesis of AMP from IMP. This chain is Adenylosuccinate synthetase, found in Arthrobacter sp. (strain FB24).